The chain runs to 37 residues: DANSFCQLPAVVGRCRGRFPRYYYNTEAGKCQRFIYG.

The BPTI/Kunitz inhibitor domain occupies 6–37 (CQLPAVVGRCRGRFPRYYYNTEAGKCQRFIYG).

This sequence belongs to the venom Kunitz-type family. Sea anemone type 2 potassium channel toxin subfamily.

It localises to the secreted. The protein localises to the nematocyst. Functionally, dual-function toxin that inhibits both the serine protease trypsin and voltage-gated potassium channels (Kv). In Actinia equina (Beadlet anemone), this protein is Kunitz-type proteinase inhibitor AEPI-IV.